Consider the following 409-residue polypeptide: G2/mitotic-specific cyclin-B (409 aa).

Belongs to the cyclin family. Cyclin AB subfamily. In terms of assembly, interacts with the CDK1 protein kinase to form a serine/threonine kinase holoenzyme complex also known as maturation promoting factor (MPF). The cyclin subunit imparts substrate specificity to the complex.

In terms of biological role, essential for the control of the cell cycle at the G2/M (mitosis) transition. The protein is G2/mitotic-specific cyclin-B of Arbacia punctulata (Punctuate sea urchin).